Here is a 504-residue protein sequence, read N- to C-terminus: Procardosin-A (504 aa).

An N-terminal signal peptide occupies residues 1–24 (MGTSIKANVLALFLFYLLSPTVFS). Residues 25–68 (VSDDGLIRIGLKKRKVDRIDQLRGRRALMEGNARKDFGFRGTVR) constitute a propeptide that is removed on maturation. The Peptidase A1 domain maps to 85-501 (YFGEIGIGTP…DYGNLLVGFA (417 aa)). D103 is an active-site residue. An intrachain disulfide couples C116 to C122. The N-linked (GlcNAc...) asparagine glycan is linked to N139. The short motif at 246-248 (RGD) is the RGD motif element. C277 and C281 are joined by a disulfide. D286 is a catalytic residue. The propeptide at 310–414 (GVMNQQCKTV…YANELCEHLS (105 aa)) is plant-specific insert. The Saposin B-type domain occupies 311–416 (VMNQQCKTVV…NELCEHLSTS (106 aa)). Disulfide bonds link C316-C410, C341-C382, C347-C379, and C424-C461. N-linked (GlcNAc...) asparagine glycosylation is present at N432. Residues 455-457 (KGE) carry the KGE motif motif.

This sequence belongs to the peptidase A1 family. As to quaternary structure, heterodimer of a light chain and a heavy chain. An intermediate form (35 kDa and 30 kDa subunits) is produced first, and undergoes proteolytic processing to remove the internal plant-specific insert (PSI) and the propeptide. There is some heterogeniety at the cleavage site. Interacts (via RGD or KGE motifs) with PLD1 (via C2 domain). Post-translationally, N-glycosylated. Glycans found at Asn-139 include approximately 6% oligomannose, 82% oligosaccharides of the plant modified type with proximal fucose but without xylose and 6% oligosaccharides of the plant modified type with proximal fucose and xylose. Glycans found at Asn-432 include 14% oligosaccharides of the plant modified type with proximal fucose but without xylose and 86% oligosaccharides of the plant modified type with proximal fucose and xylose. As to expression, detected only in pistils, not in seeds, roots, midribs, bracts, stamens, pollen, vascular or supporting tissues. Detected in seeds. High amounts are detected in the broad outer region of the upper portion of the stigma, towards the lower portion of the stigma it accumulates at the periphery. Within the stigma, expressed mainly in the epidermic papillae, lower levels are found in the cortical parenchyma. Present mainly in epidermal cells within the stye (at protein level). Expressed in young flower buds, and at lower levels in seeds, pollen and bracteas, but not in roots or leaves.

The protein resides in the microsome membrane. The protein localises to the protein storage vacuole. Its subcellular location is the secreted. It is found in the cell wall. It localises to the extracellular space. The protein resides in the extracellular matrix. With respect to regulation, inhibited by the specific aspartic proteinase inhibitors diazoacetyl-noleucine methyl ester and pepstatin. Its function is as follows. Aspartic proteinase with a high preference for bonds between hydrophobic residues. Cleaves alpha-lactalbumin but not beta-lactoglobulin. In Cynara cardunculus (Cardoon), this protein is Procardosin-A.